The following is a 191-amino-acid chain: Syndecan-2-A (191 aa).

The first 22 residues, 1-22, serve as a signal peptide directing secretion; it reads MRNVWLIVPFALLAALSGETWA. The Extracellular segment spans residues 23-137; that stretch reads QADRDLYIDS…NLFHRTEVLA (115 aa). Positions 32-60 are disordered; it reads STESSGNYPVDDDDYSSGSGSGIPARGDD. O-linked (Xyl...) (glycosaminoglycan) serine glycans are attached at residues Ser36, Ser48, Ser50, and Ser52. The helical transmembrane segment at 138-158 threads the bilayer; sequence AVIAGGGIGFLFAVFLILLLV. Over 159-191 the chain is Cytoplasmic; sequence YRMRKKDEGSYDLGERKPSSAVYQKAPTKEFYA. Residues 168-191 are disordered; sequence SYDLGERKPSSAVYQKAPTKEFYA.

This sequence belongs to the syndecan proteoglycan family. In terms of processing, O-glycosylated; contains both heparan sulfate and chondroitin sulfate.

The protein localises to the membrane. Functionally, cell surface proteoglycan. This Xenopus laevis (African clawed frog) protein is Syndecan-2-A (sdc2-a).